A 415-amino-acid chain; its full sequence is Extracellular signal-regulated kinase 1 (415 aa).

The Protein kinase domain maps to 66-369 (YQILEIVGEG…VEDALKHPYL (304 aa)). ATP contacts are provided by residues 72–80 (VGEGAYGIV) and lysine 95. Aspartate 190 acts as the Proton acceptor in catalysis. Threonine 226 carries the phosphothreonine modification. The TXY signature appears at 226 to 228 (TEY). Tyrosine 228 is subject to Phosphotyrosine.

This sequence belongs to the protein kinase superfamily. CMGC Ser/Thr protein kinase family. MAP kinase subfamily. Mg(2+) serves as cofactor. Dually phosphorylated on Thr-226 and Tyr-228, which activates the enzyme.

The catalysed reaction is L-seryl-[protein] + ATP = O-phospho-L-seryl-[protein] + ADP + H(+). The enzyme catalyses L-threonyl-[protein] + ATP = O-phospho-L-threonyl-[protein] + ADP + H(+). Its activity is regulated as follows. Activated by tyrosine and threonine phosphorylation. This chain is Extracellular signal-regulated kinase 1 (CEK1), found in Candida albicans (strain WO-1) (Yeast).